Reading from the N-terminus, the 149-residue chain is Large ribosomal subunit protein uL13 (149 aa).

This sequence belongs to the universal ribosomal protein uL13 family. In terms of assembly, part of the 50S ribosomal subunit.

Functionally, this protein is one of the early assembly proteins of the 50S ribosomal subunit, although it is not seen to bind rRNA by itself. It is important during the early stages of 50S assembly. This is Large ribosomal subunit protein uL13 from Chlorobium phaeobacteroides (strain DSM 266 / SMG 266 / 2430).